A 195-amino-acid chain; its full sequence is Imidazoleglycerol-phosphate dehydratase (195 aa).

Belongs to the imidazoleglycerol-phosphate dehydratase family.

It is found in the cytoplasm. The enzyme catalyses D-erythro-1-(imidazol-4-yl)glycerol 3-phosphate = 3-(imidazol-4-yl)-2-oxopropyl phosphate + H2O. The protein operates within amino-acid biosynthesis; L-histidine biosynthesis; L-histidine from 5-phospho-alpha-D-ribose 1-diphosphate: step 6/9. The sequence is that of Imidazoleglycerol-phosphate dehydratase from Ruegeria sp. (strain TM1040) (Silicibacter sp.).